The sequence spans 470 residues: MVQPHVLLVTFPAQGHINPSLQFAKRLIEMGIEVTFTTSVFAHRRMAKIAASTAPKGLNLAAFSDGFDDGFKSNVDDSKRYMSEIRSRGSQTLRDVILKSSDEGRPVTSLVYTLLLPWAAEVARELHIPSALLWIQPATVLDIYYYYFNGYEDEMKCSSSNDPNWSIQLPRLPLLKSQDLPSFLVSSSSKDDKYSFALPTFKEQLDTLDGEENPKVLVNTFDALELEPLKAIEKYNLIGIGPLIPSSFLGGKDSLESSFGGDLFQKSNDDYMEWLNTKPKSSIVYISFGSLLNLSRNQKEEIAKGLIEIQRPFLWVIRDQEEEKEEEKLSCMMELEKQGKIVPWCSQLEVLTHPSLGCFVSHCGWNSTLESLSSGVPVVAFPHWTDQGTNAKLIEDVWKTGVRMRVNEDGVVESDEIKRCIEIVMDGGEKGEEMRKNAQKWKELARAAVKEGGSSEVNLKAFVLQVSKSC.

Histidine 16 serves as the catalytic Proton acceptor. Histidine 16 serves as a coordination point for an anthocyanidin. The UDP-alpha-D-glucose site is built by glutamine 347, histidine 362, tryptophan 365, asparagine 366, serine 367, glutamate 370, aspartate 386, and glutamine 387.

It belongs to the UDP-glycosyltransferase family. In terms of tissue distribution, expressed in flowers and fruits, especially in pulp, and, at lower levels, in seeds.

The protein resides in the cytoplasm. It is found in the nucleus. The enzyme catalyses 2-cis-(+)-abscisate + UDP-alpha-D-glucose = beta-D-glucopyranosyl cis-(+)-abscisate + UDP. The catalysed reaction is (indol-3-yl)acetate + UDP-alpha-D-glucose = 1-O-(indol-3-ylacetyl)-beta-D-glucose + UDP. Functionally, glucosyltransferase acting on both abscisic acid (ABA) and auxin (IAA). Required for ABA-mediated fruit ripening, seed germination, and negative responses to drought. The polypeptide is UDP-glycosyltransferase 75C1 (Solanum lycopersicum (Tomato)).